The primary structure comprises 185 residues: MSTQVMNETKERMQKAISAYQRELATVRAGRANPSLLDKVAVEYYGAQTPLNQIASITVPEARMLVITPYDKTALGDIEKAIQKADLGVTPSNDGNIIRITIPPLTEERRKELAKLVKKYSEDAKVAVRNIRRDANDDLKKLEKNGEMTEDELRSSTEDVQKLTDEYVSKIDEITKDKEKEIMEV.

Belongs to the RRF family.

Its subcellular location is the cytoplasm. Functionally, responsible for the release of ribosomes from messenger RNA at the termination of protein biosynthesis. May increase the efficiency of translation by recycling ribosomes from one round of translation to another. This is Ribosome-recycling factor from Bacillus licheniformis (strain ATCC 14580 / DSM 13 / JCM 2505 / CCUG 7422 / NBRC 12200 / NCIMB 9375 / NCTC 10341 / NRRL NRS-1264 / Gibson 46).